The chain runs to 376 residues: Palmitoyl-[acyl-carrier-protein] 4-desaturase 2, chloroplastic (376 aa).

The transit peptide at 1-33 (MELHLALRASPLPAADPGRRPPPPRGNFATNCT) directs the protein to the chloroplast. Fe cation is bound by residues glutamate 114, glutamate 149, histidine 152, glutamate 202, glutamate 235, and histidine 238.

It belongs to the fatty acid desaturase type 2 family. As to quaternary structure, homodimer. The cofactor is Fe(2+). In terms of tissue distribution, preferentially expressed in the flower labellum.

It localises to the plastid. It is found in the chloroplast stroma. It carries out the reaction hexadecanoyl-[ACP] + 2 reduced [2Fe-2S]-[ferredoxin] + O2 + 2 H(+) = (4Z)-hexadecenoyl-[ACP] + 2 oxidized [2Fe-2S]-[ferredoxin] + 2 H2O. It catalyses the reaction octadecanoyl-[ACP] + 2 reduced [2Fe-2S]-[ferredoxin] + O2 + 2 H(+) = (9Z)-octadecenoyl-[ACP] + 2 oxidized [2Fe-2S]-[ferredoxin] + 2 H2O. It functions in the pathway lipid metabolism; fatty acid metabolism. Converts stearoyl-ACP to oleoyl-ACP by introduction of a cis double bond between carbons 9 and 10 of the acyl chain. Converts palmitoyl-ACP to (4Z)-hexadec-4-enoyl-ACP by introduction of a cis double bond between carbons 4 and 5 of the acyl chain. Catalyzes the desaturation of saturated fatty acid 18:0 and 16:0 to generate 18:1 (delta-9) and 16:1 (delta-4) intermediates, expected to give rise to 9-alkenes and 12-alkenes, respectively. The chain is Palmitoyl-[acyl-carrier-protein] 4-desaturase 2, chloroplastic (SAD2) from Ophrys arachnitiformis subsp. archipelagi (Orchid).